The sequence spans 1505 residues: MVANFNPSVGSFVWVEDPDEAWIDGEVVQVNGDEIKVLCTSGKHVVTKISNAYPKDVEAPASGVDDMTRLAYLHEPGVLQNLHSRYDINEIYTYTGSILIAVNPFRRLPHLYSSHMMAQYKGASLGELSPHPFAVADAAYRQMINDGVSQSILVSGESGAGKTESTKLLMRYLAYMGGRAAAEGRSVEQKVLESNPVLEAFGNAKTVRNNNSSRFGKFVEIQFDEKGRISGAAIRTYLLERSRVCQVSDPERNYHCFYMLCAAPQEDVKKFKLEEPKKYHYLNQSKCLELDSINDAEEYHATRRAMDVVGISTEEQDAIFSVVAAILHIGNIEFAKGEEIDSSIPKDDKSLFHLKTAAELLSCDEKALEDSLCKRIMVTRDETITKTLDPEAATLSRDALAKVMYSRLFDWLVDKINSSIGQDHDSKYLIGVLDIYGFESFKTNSFEQFCINLTNEKLQQHFNQHVFKMEQEEYKKEEINWSYIEFVDNQDILDLIEKKPGGIIALLDEACMFPRSTHETFAQKLYQTFKTHKRFTKPKLARSDFTICHYAGDVTYQTELFLDKNKDYVIAEHQALLNSSSCSFVASLFPPMSDDSKQSKFSSIGTRFKQQLVSLLEILNTTEPHYIRCIKPNNLLKPGIFENENILQQLRCGGVMEAIRISCAGYPTRKHFDEFLARFGILAPEVLVKNSDDPAACKKLLDKVGLEGYQIGKTKVFLRAGQMADLDTRRTEVLGRSASIIQRKVRSYLAKKSFIVLRNSAKQIQSVCRGYLARSVYEGMRREAAALKIQRDLRRFLARKAYTELYSAAVSVQAGMRGMVARKELCFRRQTKAAIIIQTWCRGYLARLHYRKLKKAAITTQCAWRSKVARGELRKLKMAARETGALQAAKNKLEKQVEELTWRLQLEKRIRTDLEEAKKQESAKAQSSLEELQLKCKETEALLIKEREAAKKIAETAPIIKEIPVVDQELMDKITNENEKLKSMVSSLEMKIGETEKKLQETTKISQDRLNQALEAESKLVKLKTAMQRLEEKILDMEAEKKIMHQQTISTPVRTNLGHPPTAPVKNLENGHQTNLEKEFNEAEFTTPVDGKAGKSAAERQIMNVDALIDCVKDNIGFSNGKPVAAFTIYKCLLHWKCFESEKTNVFDRLIQMIGSAIENEDDNSHLAYWLTSTSALLFLLQKSLKTNGSGATQSKKPPASTSLFGRMAMSFRSSPASGNLAAAAEAAALAVVRPVEAKYPALLFKQQLAAYVEKMFGMVRDNLKRELSTLLSLCIQAPRSSKGGMLRSGRSFGKDSPAVHWQSIIDGLNSLLVTLKENHVPLVLIQKIYSQTFSYINVQLFNSLLLRKECCTFSNGEFVKSGLAELELWCCQAKEYSGPSWEELKHIRQAVGFLVIHQKYRISYDEIANDLCPVLSVQQLYRICTLYWDDSYNTRSVSQEVISSMRTLMTEESNDADSDSFLLDDDSSIPFSIDDISSSMEEKDFVGIKPAEELLENPAFVFLH.

In terms of domain architecture, Myosin N-terminal SH3-like spans 8–57 (SVGSFVWVEDPDEAWIDGEVVQVNGDEIKVLCTSGKHVVTKISNAYPKDV). The Myosin motor domain maps to 62 to 731 (SGVDDMTRLA…QMADLDTRRT (670 aa)). ATP contacts are provided by residues 156–163 (GESGAGKT) and 209–217 (NNNSSRFGK). Actin-binding stretches follow at residues 495 to 529 (LIEK…YQTF), 531 to 554 (THKR…AGDV), 589 to 612 (FPPM…KQQL), and 612 to 634 (LVSL…KPNN). IQ domains lie at 734-763 (LGRS…SAKQ), 757-786 (LRNS…EAAA), 782-811 (REAA…AAVS), 805-834 (LYSA…TKAA), 830-859 (QTKA…AAIT), and 853-882 (LKKA…AARE). The stretch at 883–1048 (TGALQAAKNK…AEKKIMHQQT (166 aa)) forms a coiled coil. The 305-residue stretch at 1148 to 1452 (DRLIQMIGSA…ISSMRTLMTE (305 aa)) folds into the Dilute domain.

The protein belongs to the TRAFAC class myosin-kinesin ATPase superfamily. Myosin family. Plant myosin class XI subfamily. In terms of assembly, homodimer. Interacts with RABC2A and RABD1. As to expression, expressed in flowers, leaves, roots and stems.

It localises to the cytoplasm. Its function is as follows. Myosin heavy chain that is required for the cell cycle-regulated transport of various organelles and proteins for their segregation. Functions by binding with its tail domain to receptor proteins on organelles and exerting force with its N-terminal motor domain against actin filaments, thereby transporting its cargo along polarized actin cables. Involved in the tip growth of root hair cells. Plays a major role in trafficking of Golgi stacks, mitochondria and peroxisomes during root hair development. Targets the peroxisome through an interaction with RABC2A. Required for development of pavement cells, trichomes, and stigmatic papillae. The protein is Myosin-6 (XI-2) of Arabidopsis thaliana (Mouse-ear cress).